Consider the following 157-residue polypeptide: Protein p17 (157 aa).

Disordered regions lie at residues 46–70 (VTFG…PEGK) and 83–157 (TSRK…STQR). Low complexity predominate over residues 88-100 (LTPTPSLSPLTSL). A compositionally biased stretch (polar residues) spans 114–132 (TSTPIPSAGTSSTLTQRVL). Residues 134–157 (SLRAPSASTRRSLTASSSSPSTQR) are compositionally biased toward low complexity.

This chain is Protein p17 (p17), found in Helicoverpa armigera (Cotton bollworm).